A 525-amino-acid chain; its full sequence is MAAVEQVSSVFDTILVLDFGSQYSHLITRRLREFNVYAEMLPCTQKISELGWKPKGVILSGGPYSVYAADAPHVDRAVFELGVPILGICYGLQELAWIAGAEVGRGEKREYGRATLHVEDSACPLFNNVDSSTVWMSHGDKLHALPADFHVTATTENSPFCGIAHDSKPIFGIQFHPEVTHSSQGKTLLKNFAVEICQAAQTWTMENFIDTEIQRIRTLVGPTAEVIGAVSGGVDSTVAAKLMTEAIGDRFHAILVDNGVLRLNEAANVKKILGEGLGINLTVVDASEEFLTKLKGVTDPEKKRKIIGNTFIHVFEREAARIQPKNGEEIEFLLQGTLYPDVIESISFKGPSQTIKTHHNVGGLLDNMKLKLIEPLRELFKDEVRHLGELLGISHELVWRHPFPGPGIAIRVLGEVTKEQVEIARKADHIYIEEIRKAGLYNKISQAFACLLPVKSVGVMGDQRTYDQVIALRAIETTDFMTADWYPFEHEFLKHVASRIVNEVEGVARVTYDITSKPPATVEWE.

Residues 13-202 enclose the Glutamine amidotransferase type-1 domain; that stretch reads TILVLDFGSQ…AVEICQAAQT (190 aa). Cys89 acts as the Nucleophile in catalysis. Residues His176 and Glu178 contribute to the active site. The 198-residue stretch at 203-400 folds into the GMPS ATP-PPase domain; sequence WTMENFIDTE…LGISHELVWR (198 aa). ATP is bound at residue 231 to 237; it reads SGGVDST. Arg304, Asp462, Lys517, and Glu523 together coordinate XMP.

In terms of assembly, homodimer. It depends on Mg(2+) as a cofactor.

It localises to the cytoplasm. Its subcellular location is the cytosol. It catalyses the reaction XMP + L-glutamine + ATP + H2O = GMP + L-glutamate + AMP + diphosphate + 2 H(+). The protein operates within purine metabolism; GMP biosynthesis; GMP from XMP (L-Gln route): step 1/1. Its function is as follows. Catalyzes the conversion of xanthine monophosphate (XMP) to GMP in the presence of glutamine and ATP through an adenyl-XMP intermediate. The protein is GMP synthase [glutamine-hydrolyzing] (GUA1) of Eremothecium gossypii (strain ATCC 10895 / CBS 109.51 / FGSC 9923 / NRRL Y-1056) (Yeast).